The primary structure comprises 384 residues: Probable RNA 3'-terminal phosphate cyclase-like protein (384 aa).

It belongs to the RNA 3'-terminal cyclase family. Type 2 subfamily. In terms of assembly, part of the small subunit (SSU) processome, composed of more than 70 proteins and the RNA chaperone small nucleolar RNA (snoRNA) U3.

The protein resides in the nucleus. It is found in the nucleolus. In terms of biological role, part of the small subunit (SSU) processome, first precursor of the small eukaryotic ribosomal subunit. During the assembly of the SSU processome in the nucleolus, many ribosome biogenesis factors, an RNA chaperone and ribosomal proteins associate with the nascent pre-rRNA and work in concert to generate RNA folding, modifications, rearrangements and cleavage as well as targeted degradation of pre-ribosomal RNA by the RNA exosome. Does not have cyclase activity. The polypeptide is Probable RNA 3'-terminal phosphate cyclase-like protein (Rtc1) (Drosophila melanogaster (Fruit fly)).